Reading from the N-terminus, the 64-residue chain is Antimicrobial peptide THP2 (64 aa).

The first 28 residues, 1 to 28, serve as a signal peptide directing secretion; it reads MRILYLLFSLLFLALQVSPGLSSPKRDM. 3 disulfide bridges follow: C31-C57, C36-C51, and C41-C58.

Expressed in circulating heterophil granulocytes and bone marrow (at protein level).

It localises to the secreted. Its function is as follows. Antibacterial activity against the Gram-positive bacterium Staphylococcus aureus. Lacks antibacterial activity against the Gram-negative bacterium E.coli K-12. The polypeptide is Antimicrobial peptide THP2 (Meleagris gallopavo (Wild turkey)).